Consider the following 691-residue polypeptide: Kinetochore protein NDC80 (691 aa).

A disordered region spans residues 1–95 (MQSSTSTDQH…LNDKSNSRNS (95 aa)). Residues 10–19 (HVLHHMDPHR) are compositionally biased toward basic and acidic residues. The span at 20–42 (FTSQIPTATSSQLRRRNSTNQGL) shows a compositional bias: polar residues. Position 38 is a phosphothreonine (T38). Over residues 54 to 65 (TISGTGIPTGGI) the composition is skewed to low complexity. At T248 the chain carries Phosphothreonine. Coiled coils occupy residues 376-446 (GKLE…SIKS) and 522-686 (KKSI…FETE).

It belongs to the NDC80/HEC1 family. In terms of assembly, component of the NDC80 complex, which consists of NDC80, NUF2, SPC24 and SPC25. The NDC80 complex is formed by two subcomplexes, NDC80-NUF2 and SPC24-SPC25, which are joined end-to-end through their coiled-coil domains. It has a rod-like structure with a length of 570 Angstroms and globular domains at either end. The NDC80-NUF2 globular domains are probably directed to microtubules, the SPC24-SPC25 globular domains to the centromere. NDC80 probably interacts with SMC1 and SMC2. Also interacts with KIN3. Interacts with DMC1.

It localises to the nucleus. The protein localises to the chromosome. It is found in the centromere. Its subcellular location is the kinetochore. Functionally, acts as a component of the essential kinetochore-associated NDC80 complex, which is involved in chromosome segregation and spindle checkpoint activity. This chain is Kinetochore protein NDC80, found in Saccharomyces cerevisiae (strain ATCC 204508 / S288c) (Baker's yeast).